The following is a 392-amino-acid chain: Sugar efflux transporter A (392 aa).

The Cytoplasmic segment spans residues 1–10 (MIWIMTMARR). Residues 11–31 (MNGVYAAFMLVAFMMGVAGAL) form a helical membrane-spanning segment. Residues 32-48 (QAPTLSLFLSREVGAQP) are Periplasmic-facing. Residues 49-69 (FWIGLFYTVNAIAGIGVSLWL) traverse the membrane as a helical segment. Residues 70–81 (AKRSDSQGDRRK) are Cytoplasmic-facing. The helical transmembrane segment at 82 to 102 (LIIFCCLMAIGNALLFAFNRH) threads the bilayer. Topologically, residues 103–106 (YLTL) are periplasmic. A helical membrane pass occupies residues 107-127 (ITCGVLLASLANTAMPQLFAL). Residues 128–149 (AREYADNSAREVVMFSSVMRAQ) lie on the Cytoplasmic side of the membrane. A helical transmembrane segment spans residues 150–170 (LSLAWVIGPPLAFMLALNYGF). Position 171 (Thr171) is a topological domain, periplasmic. Residues 172 to 192 (VMFSIAAGIFTLSLVLIAFML) traverse the membrane as a helical segment. Residues 193 to 219 (PSVARVELPSENALSMQGGWQDSNVRM) lie on the Cytoplasmic side of the membrane. The chain crosses the membrane as a helical span at residues 220-240 (LFVASTLMWTCNTMYIIDMPL). Residues 241–251 (WISSELGLPDK) are Periplasmic-facing. Residues 252 to 272 (LAGFLMGTAAGLEIPAMILAG) form a helical membrane-spanning segment. At 273–282 (YYVKRYGKRR) the chain is on the cytoplasmic side. A helical membrane pass occupies residues 283–303 (MMVIAVAAGVLFYTGLIFFNS). Residues 304–308 (RMALM) are Periplasmic-facing. A helical transmembrane segment spans residues 309-329 (TLQLFNAVFIGIVAGIGMLWF). The Cytoplasmic portion of the chain corresponds to 330–342 (QDLMPGRAGAATT). A helical membrane pass occupies residues 343-363 (LFTNSISTGVILAGVIQGAIA). Residues 364–365 (QS) lie on the Periplasmic side of the membrane. The chain crosses the membrane as a helical span at residues 366 to 386 (WGHFAVYWVIAVISVVALFLT). The Cytoplasmic portion of the chain corresponds to 387–392 (AKVKDV).

Belongs to the major facilitator superfamily. Set transporter family.

It localises to the cell inner membrane. Functionally, involved in the efflux of sugars. The physiological role may be the detoxification of non-metabolizable sugar analogs. Can transport IPTG, lactose and glucose. Has broad substrate specificity, with preferences for glucosides or galactosides with alkyl or aryl substituents. The chain is Sugar efflux transporter A (setA) from Escherichia coli (strain K12).